The following is a 585-amino-acid chain: A-type ATP synthase subunit A (585 aa).

Residue 231 to 238 (GPFGSGKT) participates in ATP binding.

Belongs to the ATPase alpha/beta chains family. As to quaternary structure, has multiple subunits with at least A(3), B(3), C, D, E, F, H, I and proteolipid K(x).

The protein resides in the cell membrane. It catalyses the reaction ATP + H2O + 4 H(+)(in) = ADP + phosphate + 5 H(+)(out). In terms of biological role, component of the A-type ATP synthase that produces ATP from ADP in the presence of a proton gradient across the membrane. The A chain is the catalytic subunit. The polypeptide is A-type ATP synthase subunit A (Thermococcus onnurineus (strain NA1)).